The following is a 217-amino-acid chain: UPF0502 protein KPN78578_10500 (217 aa).

Belongs to the UPF0502 family.

The protein is UPF0502 protein KPN78578_10500 of Klebsiella pneumoniae subsp. pneumoniae (strain ATCC 700721 / MGH 78578).